Here is a 448-residue protein sequence, read N- to C-terminus: Phosphoglucosamine mutase (448 aa).

The active-site Phosphoserine intermediate is the S100. 4 residues coordinate Mg(2+): S100, D240, D242, and D244. S100 is modified (phosphoserine).

The protein belongs to the phosphohexose mutase family. Mg(2+) is required as a cofactor. In terms of processing, activated by phosphorylation.

It catalyses the reaction alpha-D-glucosamine 1-phosphate = D-glucosamine 6-phosphate. Catalyzes the conversion of glucosamine-6-phosphate to glucosamine-1-phosphate. The chain is Phosphoglucosamine mutase from Clostridioides difficile (strain 630) (Peptoclostridium difficile).